We begin with the raw amino-acid sequence, 130 residues long: Small ribosomal subunit protein bS6 (130 aa).

Residues serine 100 to glutamate 130 are disordered. Residues lysine 104–alanine 116 are compositionally biased toward basic and acidic residues. Positions alanine 119–glutamate 130 are enriched in acidic residues.

This sequence belongs to the bacterial ribosomal protein bS6 family.

In terms of biological role, binds together with bS18 to 16S ribosomal RNA. This is Small ribosomal subunit protein bS6 from Yersinia pestis (strain Pestoides F).